A 424-amino-acid polypeptide reads, in one-letter code: Probable biofilm formation methyltransferase WspC (424 aa).

The region spanning 1-263 (MNEQRFFRFL…IAQSFAYVRH (263 aa)) is the CheR-type methyltransferase domain. S-adenosyl-L-methionine contacts are provided by residues Thr68, Arg72, Glu109, Asp133, 187–188 (NV), and 206–207 (RN). A TPR repeat occupies 355-388 (AQVYYWLGLLSDTEGDAQQALSHYRKALYLEPQH).

Monomer. The TPR repeat does not mediate self-association.

In terms of biological role, involved in biofilm formation. The sequence is that of Probable biofilm formation methyltransferase WspC (wspC) from Pseudomonas putida (strain ATCC 47054 / DSM 6125 / CFBP 8728 / NCIMB 11950 / KT2440).